The sequence spans 114 residues: Non-specific lipid-transfer protein 2 (114 aa).

The signal sequence occupies residues Met1 to Glu23. 4 disulfide bridges follow: Cys27–Cys73, Cys37–Cys50, Cys51–Cys96, and Cys71–Cys110.

Belongs to the plant LTP family.

Functionally, plant non-specific lipid-transfer proteins transfer phospholipids as well as galactolipids across membranes. May play a role in wax or cutin deposition in the cell walls of expanding epidermal cells and certain secretory tissues. In Solanum chilense (Tomato), this protein is Non-specific lipid-transfer protein 2.